Here is a 1364-residue protein sequence, read N- to C-terminus: MNKIYYLKYCHITKSLIAVSELARRVTCKSHRRLSRRVILTSVAALSLSSAWPALSATVSAEIPYQIFRDFAENKGQFTPGTTNISIYDKQGNLVGKLDKAPMADFSSATITTGSLPPGDHTLYSPQYVVTAKHVSGSDTMSFGYAKNTYTAVGTNNNSGLDIKTRRLSKLVTEVAPAEVSDIGAVSGAYQAGGRFTEFYRLGGGMQYVKDKNGNRTQVYTNGGFLVGGTVSALNSYNNGQMITAQTGDIFNPANGPLANYLNMGDSGSPLFAYDSLQKKWVLIGVLSSGTNYGNNWVVTTQDFLGQQPQNDFDKTIAYTSGEGVLQWKYDAANGTGTLTQGNTTWDMHGKKGNDLNAGKNLLFTGNNGEVVLQNSVNQGAGYLQFAGDYRVSALNGQTWMGGGIITDKGTHVLWQVNGVAGDNLHKTGEGTLTVNGTGVNAGGLKVGDGTVILNQQADADGKVQAFSSVGIASGRPTVVLSDSQQVNPDNISWGYRGGRLELNGNNLTFTRLQAADYGAIITNNSEKKSTVTLDLQTLKASDINVPVNTVSIFGGRGAPGDLYYDSSTKQYFILKASSYSPFFSDLNNSSVWQNVGKDRNKAIDTVKQQKIEASSQPYMYHGQLNGNMDVNIPQLSGKDVLALDGSVNLPEGSITKKSGTLIFQGHPVIHAGTTTSSSQSDWETRQFTLEKLKLDAATFHLSRNGKMQGDINATNGSTVILGSSRVFTDRSDGTGNAVFSVEGSATATTVGDQSDYSGNVTLENKSSLQIMERFTGGIEAYDSTVSVTSQNAVFDRVGSFVNSSLTLGKGAKLTAQSGIFSTGAVDVKENASLTLTGMPSAQKQGYYSPVISTTEGINLEDNASFSVKNMGYLSSDIHAGTTAATINLGDSDADAGKTDSPLFSSLMKGYNAVLRGSITGAQSTVNMINALWYSDGKSEAGALKAKGSRIELGDGKHFATLQVKELSADNTTFLMHTNNSRADQLNVTDKLSGSNNSVLVDFLNKPASEMSVTLITAPKGSDEKTFTAGTQQIGFSNVTPVISTEKTDDATKWVLTGYQTTADAGASKAAKDFMASGYKSFLTEVNNLNKRMGDLRDTQGDAGVWARIMNGTGSADGDYSDNYTHVQIGVDRKHELDGVDLFTGALLTYTDSNASSHAFSGKNKSVGGGLYASALFNSGAYFDLIGKYLHHDNQHTANFASLGTKDYSSHSWYAGAEVGYRYHLTKESWVEPQIELVYGSVSGKAFSWEDRGMALSMKDKDYNPLIGRTGVDVGRAFSGDDWKITARAGLGYQFDLLANGETVLQDASGEKRFEGEKDSRMLMTVGMNAEIKDNMRLGLELEKSAFGKYNVDNAINANFRYVF.

Positions 1-56 (MNKIYYLKYCHITKSLIAVSELARRVTCKSHRRLSRRVILTSVAALSLSSAWPALS) are cleaved as a signal peptide. The Peptidase S6 domain occupies 57–307 (ATVSAEIPYQ…VVTTQDFLGQ (251 aa)). Active-site charge relay system residues include histidine 134, aspartate 162, and serine 267. The 267-residue stretch at 1098–1364 (DTQGDAGVWA…AINANFRYVF (267 aa)) folds into the Autotransporter domain.

Post-translationally, cleaved to release the mature protein from the outer membrane. Cleavage is performed by an unknown protease.

The protein localises to the periplasm. It localises to the secreted. Its subcellular location is the cell surface. The protein resides in the cell outer membrane. Inhibited by the serine protease inhibitor PMSF, but not by benzamidine, alpha 1-antitrypsin, alpha 1-antichymotrypsin. Not inhibited by metalloprotease inhibitors such as EDTA and orthophenanthroline. In terms of biological role, major protein secreted in laboratory media showing proteolytic activity. May be involved in invasion and destruction of host intestinal epithelium. The protein is Serine protease SepA autotransporter (sepA) of Shigella flexneri.